Reading from the N-terminus, the 356-residue chain is 7,8-didemethyl-8-hydroxy-5-deazariboflavin synthase (356 aa).

The region spanning 40–280 is the Radical SAM core domain; that stretch reads ITYSKNVFIP…KDISIQVPPN (241 aa). [4Fe-4S] cluster-binding residues include Cys-54, Cys-58, and Cys-61.

The protein belongs to the radical SAM superfamily. CofG family. As to quaternary structure, consists of two subunits, CofG and CofH. [4Fe-4S] cluster is required as a cofactor.

It catalyses the reaction 5-amino-5-(4-hydroxybenzyl)-6-(D-ribitylimino)-5,6-dihydrouracil + S-adenosyl-L-methionine = 7,8-didemethyl-8-hydroxy-5-deazariboflavin + 5'-deoxyadenosine + L-methionine + NH4(+) + H(+). It functions in the pathway cofactor biosynthesis; coenzyme F0 biosynthesis. Its function is as follows. Catalyzes the radical-mediated synthesis of 7,8-didemethyl-8-hydroxy-5-deazariboflavin from 5-amino-5-(4-hydroxybenzyl)-6-(D-ribitylimino)-5,6-dihydrouracil. In Methanococcus aeolicus (strain ATCC BAA-1280 / DSM 17508 / OCM 812 / Nankai-3), this protein is 7,8-didemethyl-8-hydroxy-5-deazariboflavin synthase.